Reading from the N-terminus, the 269-residue chain is 5'-nucleotidase SurE (269 aa).

Positions 11, 12, 43, and 101 each coordinate a divalent metal cation.

This sequence belongs to the SurE nucleotidase family. Requires a divalent metal cation as cofactor.

The protein resides in the cytoplasm. The catalysed reaction is a ribonucleoside 5'-phosphate + H2O = a ribonucleoside + phosphate. Nucleotidase that shows phosphatase activity on nucleoside 5'-monophosphates. The sequence is that of 5'-nucleotidase SurE from Prochlorococcus marinus (strain MIT 9303).